The sequence spans 366 residues: MGGESNEGGEMGFKHGDDESGGISRVGITSMPLYAKADPFFSSADWDPVVNAAAAGFSSSHYHPSMAMDNPGMSCFSHYQPGSVSGFAADMPASLLPFGDCGGGQIGHFLGSDKKGERLIRAGESSHEDHHQVSDDAVLGASPVGKRRLPEAESQWNKKAVEEFQEDPQRGNDQSQKKHKNDQSKETVNKESSQSEEAPKENYIHMRARRGQATNSHSLAERVRREKISERMRLLQELVPGCNKITGKAVMLDEIINYVQSLQQQVEFLSMKLATVNPEINIDIDRILAKDLLQSRDRNTPTLGLNPFAGFQGNIPNLSATTNPQYNPLPQTTLESELQNLYQMGFVSNPSTMSSFSPNGRLKPEL.

The span at 1–11 shows a compositional bias: gly residues; it reads MGGESNEGGEM. Disordered regions lie at residues 1–20 and 123–201; these read MGGE…DDES and GESS…APKE. Basic and acidic residues-rich tracts occupy residues 123–134 and 159–170; these read GESSHEDHHQVS and KAVEEFQEDPQR. The bHLH domain maps to 212–262; that stretch reads QATNSHSLAERVRREKISERMRLLQELVPGCNKITGKAVMLDEIINYVQSL.

As to quaternary structure, homodimer. Interacts with IBH1. Binds reversibly to CRY2 after blue light illumination. Expressed constitutively in roots, leaves, stems, and flowers.

It is found in the nucleus. Its function is as follows. Transcriptional activator involved in cell elongation. Regulates the expression of a subset of genes involved in cell expansion by binding to the G-box motif. Binds to chromatin DNA of the FT gene and promotes its expression, and thus triggers flowering in response to blue light. The polypeptide is Transcription factor bHLH74 (BHLH74) (Arabidopsis thaliana (Mouse-ear cress)).